We begin with the raw amino-acid sequence, 183 residues long: Apo-citrate lyase phosphoribosyl-dephospho-CoA transferase (183 aa).

This sequence belongs to the CitX family.

It catalyses the reaction apo-[citrate lyase ACP] + 2'-(5''-triphospho-alpha-D-ribosyl)-3'-dephospho-CoA = holo-[citrate lyase ACP] + diphosphate. In terms of biological role, transfers 2-(5''-triphosphoribosyl)-3'-dephosphocoenzyme-A on a serine residue to the apo-acyl carrier protein (gamma chain) of the citrate lyase to yield holo-acyl carrier protein. The protein is Apo-citrate lyase phosphoribosyl-dephospho-CoA transferase of Escherichia coli O45:K1 (strain S88 / ExPEC).